The chain runs to 379 residues: Succinyl-diaminopimelate desuccinylase (379 aa).

Residue His-70 participates in Zn(2+) binding. The active site involves Asp-72. Asp-103 provides a ligand contact to Zn(2+). Glu-137 serves as the catalytic Proton acceptor. Positions 138, 166, and 352 each coordinate Zn(2+).

Belongs to the peptidase M20A family. DapE subfamily. As to quaternary structure, homodimer. Zn(2+) serves as cofactor. It depends on Co(2+) as a cofactor.

The enzyme catalyses N-succinyl-(2S,6S)-2,6-diaminopimelate + H2O = (2S,6S)-2,6-diaminopimelate + succinate. It participates in amino-acid biosynthesis; L-lysine biosynthesis via DAP pathway; LL-2,6-diaminopimelate from (S)-tetrahydrodipicolinate (succinylase route): step 3/3. Functionally, catalyzes the hydrolysis of N-succinyl-L,L-diaminopimelic acid (SDAP), forming succinate and LL-2,6-diaminopimelate (DAP), an intermediate involved in the bacterial biosynthesis of lysine and meso-diaminopimelic acid, an essential component of bacterial cell walls. The protein is Succinyl-diaminopimelate desuccinylase of Burkholderia cenocepacia (strain HI2424).